The primary structure comprises 162 residues: Heat shock protein beta-6 (162 aa).

Residues 1-72 are involved in stabilization of the HSPB1:HSBP6 heterodimer; that stretch reads MEIPVPVQPS…PTAQVSTDSG (72 aa). Serine 16 is subject to Phosphoserine. Residues 56-162 enclose the sHSP domain; sequence RAPSVALPTA…AQLPSPPAAK (107 aa). Glutamine 66 bears the Deamidated glutamine mark. Serine 157 is subject to Phosphoserine.

Belongs to the small heat shock protein (HSP20) family. As to quaternary structure, homodimer. Small heat shock proteins form high molecular mass oligomers containing variable number of monomers; these oligomers display a very flexible quaternary structure easily exchanging their subunits. Heterooligomer with HSPB1; formed through oligomerization of HSPB1:HSBP6 dimers; subunit exchange leads to formation of at least two different heterooligomeric complexes, differing in variable quantities of HSPB1 and HSPB6 homodimers in addition to HSPB1:HSPB6 heterodimers. Heterooligomer with CRYAB; large heterooligomers consist of CRYAB homodimers and HSPB5:HSPB6 heterodimers but lacking HSPB6 homodimers. Interacts with BAG3. Interacts (phosphorylated) with YWHAZ. Interacts with PDE4A and PDE4D; required for maintenance of the non-phosphorylated state of HSPB6 under basal conditions. Interacts with KDR. Interacts with PRKD1. Phosphorylated at Ser-16 by PKA and probably PKD1K; required to protect cardiomyocytes from apoptosis.

Its subcellular location is the cytoplasm. The protein localises to the nucleus. It is found in the secreted. In terms of biological role, small heat shock protein which functions as a molecular chaperone probably maintaining denatured proteins in a folding-competent state. Seems to have versatile functions in various biological processes. Plays a role in regulating muscle function such as smooth muscle vasorelaxation and cardiac myocyte contractility. May regulate myocardial angiogenesis implicating KDR. Overexpression mediates cardioprotection and angiogenesis after induced damage. Stabilizes monomeric YWHAZ thereby supporting YWHAZ chaperone-like activity. The sequence is that of Heat shock protein beta-6 (Hspb6) from Mus musculus (Mouse).